A 228-amino-acid chain; its full sequence is Expansin-B13 (228 aa).

An N-terminal signal peptide occupies residues 1 to 22 (MASSSLLLASVVVAAMVSAVSC). An N-linked (GlcNAc...) asparagine glycan is attached at Asn32. The region spanning 61-172 (SGACGYKDVD…KEKGSEEWKA (112 aa)) is the Expansin-like EG45 domain. Disulfide bonds link Cys64–Cys92 and Cys100–Cys106. One can recognise an Expansin-like CBD domain in the interval 142-223 (GKDEELLKYV…GWKADSVYKS (82 aa)).

This sequence belongs to the expansin family. Expansin B subfamily.

The protein resides in the secreted. It localises to the cell wall. The protein localises to the membrane. In terms of biological role, may cause loosening and extension of plant cell walls by disrupting non-covalent bonding between cellulose microfibrils and matrix glucans. No enzymatic activity has been found. May be required for rapid internodal elongation in deepwater rice during submergence. The sequence is that of Expansin-B13 (EXPB13) from Oryza sativa subsp. japonica (Rice).